A 211-amino-acid polypeptide reads, in one-letter code: MRVTVLDHPLVAHKLSVLREKDTPSPVFRQLVEELVTLLAYEATRDVRVEPVTIQTPVAETQGTALTRPRPLVVPILRAGLGMLEGMTHLIPTAEVGFLGMARDDATLDIITYAERLPDDLTGRQVYVLDPMLATGGTLSEAIKFLYRRGAQDITCVCLLAAPEGLDRLEKELGDSEVNVVLASVDERLDENAYIVPGLGDAGDRLYGVVD.

Residues arginine 78, arginine 103, and 130–138 (DPMLATGGT) each bind 5-phospho-alpha-D-ribose 1-diphosphate. Residues isoleucine 195 and 200–202 (GDA) contribute to the uracil site. Aspartate 201 contributes to the 5-phospho-alpha-D-ribose 1-diphosphate binding site.

Belongs to the UPRTase family. The cofactor is Mg(2+).

It catalyses the reaction UMP + diphosphate = 5-phospho-alpha-D-ribose 1-diphosphate + uracil. It participates in pyrimidine metabolism; UMP biosynthesis via salvage pathway; UMP from uracil: step 1/1. With respect to regulation, allosterically activated by GTP. In terms of biological role, catalyzes the conversion of uracil and 5-phospho-alpha-D-ribose 1-diphosphate (PRPP) to UMP and diphosphate. The polypeptide is Uracil phosphoribosyltransferase (Kocuria rhizophila (strain ATCC 9341 / DSM 348 / NBRC 103217 / DC2201)).